Reading from the N-terminus, the 293-residue chain is Elongation factor Ts (293 aa).

The segment at 80–83 (TDFV) is involved in Mg(2+) ion dislocation from EF-Tu.

Belongs to the EF-Ts family.

It localises to the cytoplasm. Associates with the EF-Tu.GDP complex and induces the exchange of GDP to GTP. It remains bound to the aminoacyl-tRNA.EF-Tu.GTP complex up to the GTP hydrolysis stage on the ribosome. In Burkholderia lata (strain ATCC 17760 / DSM 23089 / LMG 22485 / NCIMB 9086 / R18194 / 383), this protein is Elongation factor Ts.